A 168-amino-acid chain; its full sequence is Large ribosomal subunit protein uL10 (168 aa).

This sequence belongs to the universal ribosomal protein uL10 family. In terms of assembly, part of the ribosomal stalk of the 50S ribosomal subunit. The N-terminus interacts with L11 and the large rRNA to form the base of the stalk. The C-terminus forms an elongated spine to which L12 dimers bind in a sequential fashion forming a multimeric L10(L12)X complex.

Its function is as follows. Forms part of the ribosomal stalk, playing a central role in the interaction of the ribosome with GTP-bound translation factors. This is Large ribosomal subunit protein uL10 (rplJ) from Buchnera aphidicola subsp. Baizongia pistaciae (strain Bp).